Here is a 498-residue protein sequence, read N- to C-terminus: Fascin-3 (498 aa).

Belongs to the fascin family. Expressed in testis.

The protein localises to the cytoplasm. The protein resides in the cytoskeleton. In terms of biological role, acts as an actin bundling protein. The polypeptide is Fascin-3 (Fscn3) (Mus musculus (Mouse)).